The chain runs to 316 residues: MAMPFEIEVLLPGELSPAETSALQKCEGKIITFSTLRHRASLVDIALSSYYINGAPPDTLSLLEAYRMRFAAVITRVIPGKLLAHAIGVGTPTPGLFIQNTSPVDLCNGDYICLLPPVFGSADSIRLDSVGLEIVFPLTIPQTLMREIIAKVVARAVERTAAGAQILPHEVLRGADVICYNGRRYELETNLQHRDGSDAAIRTLVLNLMFSINEGCLLLLALIPTLLVQGAHDGYVNLLIQTANCVRETGQLINIPPMPRIQDGHRRFPIYETISSWISTSSRLGDTLGTRAILRVCVFDGPSTVHPGDRTAVIQV.

The protein belongs to the herpesviridae TRX2 protein family. As to quaternary structure, interacts with TRX1 and major capisd protein/MCP.

The protein resides in the virion. Its subcellular location is the host nucleus. Structural component of the T=16 icosahedral capsid. The capsid is composed of pentamers and hexamers of major capsid protein/MCP, which are linked together by heterotrimers called triplexes. These triplexes are formed by a single molecule of triplex protein 1/TRX1 and two copies of triplex protein 2/TRX2. Additionally, TRX1 is required for efficient transport of TRX2 to the nucleus, which is the site of capsid assembly. This chain is Triplex capsid protein 2, found in Homo sapiens (Human).